The primary structure comprises 315 residues: Isoaspartyl peptidase/L-asparaginase 1 (315 aa).

Ser-169 carries the phosphoserine modification. Thr-183 serves as the catalytic Nucleophile. Substrate contacts are provided by residues 211–214 and 233–236; these read RIGD and TGKG.

The protein belongs to the Ntn-hydrolase family. As to quaternary structure, heterotetramer of two alpha and two beta chains arranged as a dimer of alpha/beta heterodimers. Cleaved into an alpha and beta chain by autocatalysis; this activates the enzyme. The N-terminal residue of the beta subunit is responsible for the nucleophile hydrolase activity.

It catalyses the reaction Cleavage of a beta-linked Asp residue from the N-terminus of a polypeptide.. Functionally, acts in asparagine catabolism but also in the final steps of protein and degradation via hydrolysis of a range of isoaspartyl dipeptides. The affinity for Asn and at least 4 isoaspartyl dipeptides (L-beta-Asp-Ala, L-beta-Asp-Gly, L-beta-Asp-Leu, L-beta-Asp-Phe) is quite low, KM being greater than 4.0 mM. The enzyme is inactive on alpha-aspartyl dipeptides. The chain is Isoaspartyl peptidase/L-asparaginase 1 from Arabidopsis thaliana (Mouse-ear cress).